A 40-amino-acid polypeptide reads, in one-letter code: Antimicrobial peptide 2 (40 aa).

The region spanning 1–40 (AQCGAQGGGATCPGGLCCSQWGWCGSTPKYCGAGCQSNCR) is the Chitin-binding type-1 domain. 4 disulfides stabilise this stretch: cysteine 3/cysteine 18, cysteine 12/cysteine 24, cysteine 17/cysteine 31, and cysteine 35/cysteine 39.

Not glycosylated.

Functionally, antimicrobial peptide active against plant pathogenic fungi and Gram-negative and -positive bacteria. The protein is Antimicrobial peptide 2 of Fagopyrum esculentum (Common buckwheat).